The following is a 305-amino-acid chain: MPSKKETLTVIVIMALFLLLTAACIGLRSEHLLMAALYLVLFFAGLPTRKLAVALLPFAIFGISYDWMRICPNYEVNPIDVAGLYNLEKSLFGVMDNGVLVTPCEYFAVHHWAVADVFAGIFYLCWVPVPILFGLCLYFKKERKTYLRFALVFLFVNLIGFAGYYIHPAAPPWYAINYGFEPILNTPGNVAGLGRFDEIFGVTIFDSIYGRNANVFAAVPSLHAAYMVVALVYAIIGKCRWYVIALFSVIMAGIWGTAIYSCHHYIIDVLLGISCALLGWLFFEYGLMKIRGFRNFFDRYYQYIK.

Positions 1 to 23 (MPSKKETLTVIVIMALFLLLTAA) are cleaved as a signal peptide. Cys-24 carries N-palmitoyl cysteine lipidation. The S-diacylglycerol cysteine moiety is linked to residue Cys-24. 6 consecutive transmembrane segments (helical) span residues 41–61 (LFFA…FAIF), 117–137 (VFAG…GLCL), 149–169 (FALV…IHPA), 216–236 (FAAV…YAII), 241–261 (WYVI…AIYS), and 266–286 (IIDV…FEYG).

The protein localises to the membrane. It catalyses the reaction N-(2-hydroxy-fatty acyl)-dihydroceramide + a 1,2-diacyl-sn-glycero-3-phospho-(1D-myo-inositol) = inositol-1-phospho-N-(2-hydroxy-fatty acyl)-dihydroceramide + a 1,2-diacyl-sn-glycerol. In terms of biological role, catalyzes the addition of a phosphorylinositol group onto dihydroceramide to form phosphoinositol dihydroceramide (PI-DHC), an essential step in sphingolipid biosynthesis. This Bacteroides thetaiotaomicron (strain ATCC 29148 / DSM 2079 / JCM 5827 / CCUG 10774 / NCTC 10582 / VPI-5482 / E50) protein is Phosphoinositol dihydroceramide synthase.